We begin with the raw amino-acid sequence, 86 residues long: Large ribosomal subunit protein bL31B (86 aa).

Belongs to the bacterial ribosomal protein bL31 family. Type B subfamily. In terms of assembly, part of the 50S ribosomal subunit.

This Streptococcus equi subsp. equi (strain 4047) protein is Large ribosomal subunit protein bL31B.